The sequence spans 167 residues: Ribonuclease P protein subunit p20 (167 aa).

The tract at residues 1 to 36 (MMGSNYPEHGTKPRSAKYHKQQNHRVVRKQPPRPAV) is disordered. Residues 12 to 31 (KPRSAKYHKQQNHRVVRKQP) show a composition bias toward basic residues.

Interacts with Smn.

It is found in the nucleus. The protein resides in the nucleolus. The protein localises to the cytoplasm. Its subcellular location is the cytoplasmic granule. Functionally, component of ribonuclease P, a protein complex that generates mature tRNA molecules by cleaving their 5'-ends. Also a component of RNase MRP complex, which cleaves pre-rRNA sequences. The chain is Ribonuclease P protein subunit p20 from Drosophila melanogaster (Fruit fly).